The following is a 659-amino-acid chain: Nicastrin (659 aa).

The N-terminal stretch at Met-1–Ser-22 is a signal peptide. Over Ser-23–Glu-627 the chain is Extracellular. N-linked (GlcNAc...) asparagine glycosylation is found at Asn-94, Asn-172, Asn-305, Asn-389, Asn-451, Asn-475, Asn-550, Asn-553, and Asn-600. The helical transmembrane segment at Ile-628 to Ile-648 threads the bilayer. At Lys-649 to Leu-659 the chain is on the cytoplasmic side.

This sequence belongs to the nicastrin family. In terms of assembly, homodimer. Component of the gamma-secretase complex, a complex composed of a presenilin homodimer, nicastrin, aph1 and pen2.

It is found in the membrane. Its function is as follows. Essential subunit of the gamma-secretase complex, an endoprotease complex that catalyzes the intramembrane cleavage of integral membrane proteins such as Notch receptors and APP (amyloid-beta precursor protein). It probably represents a stabilizing cofactor required for the assembly of the gamma-secretase complex. This is Nicastrin (ncstn) from Dictyostelium discoideum (Social amoeba).